A 1387-amino-acid polypeptide reads, in one-letter code: DNA-directed RNA polymerase subunit beta (1387 aa).

The protein belongs to the RNA polymerase beta chain family. The RNAP catalytic core consists of 2 alpha, 1 beta, 1 beta' and 1 omega subunit. When a sigma factor is associated with the core the holoenzyme is formed, which can initiate transcription.

The catalysed reaction is RNA(n) + a ribonucleoside 5'-triphosphate = RNA(n+1) + diphosphate. Functionally, DNA-dependent RNA polymerase catalyzes the transcription of DNA into RNA using the four ribonucleoside triphosphates as substrates. This chain is DNA-directed RNA polymerase subunit beta, found in Xanthomonas campestris pv. campestris (strain ATCC 33913 / DSM 3586 / NCPPB 528 / LMG 568 / P 25).